The primary structure comprises 1035 residues: Protein hir-1 (1035 aa).

WD repeat units lie at residues 15–54 (QKDF…NSHD), 68–107 (HHLG…PSHT), 129–168 (GHDN…KLKT), 171–210 (VHQS…PNAT), 232–275 (PLTT…SEIN), 299–338 (DENS…PVLI), and 342–383 (IASK…WVAK). The tract at residues 393-479 (KYGGSRKGMG…PEEESADKTA (87 aa)) is disordered. Positions 408–425 (DGLHLENHSKEKELRGAE) are enriched in basic and acidic residues.

Belongs to the WD repeat HIR1 family.

The protein localises to the nucleus. In terms of biological role, required for replication-independent chromatin assembly and for the periodic repression of histone gene transcription during the cell cycle. The polypeptide is Protein hir-1 (hir-1) (Neurospora crassa (strain ATCC 24698 / 74-OR23-1A / CBS 708.71 / DSM 1257 / FGSC 987)).